A 295-amino-acid chain; its full sequence is Pyridoxal 5'-phosphate synthase subunit PdxS (295 aa).

Position 25 (aspartate 25) interacts with D-ribose 5-phosphate. Lysine 82 functions as the Schiff-base intermediate with D-ribose 5-phosphate in the catalytic mechanism. Glycine 154 lines the D-ribose 5-phosphate pocket. Arginine 166 contacts D-glyceraldehyde 3-phosphate. D-ribose 5-phosphate is bound by residues glycine 215 and 236–237 (GS).

This sequence belongs to the PdxS/SNZ family. As to quaternary structure, in the presence of PdxT, forms a dodecamer of heterodimers.

It carries out the reaction aldehydo-D-ribose 5-phosphate + D-glyceraldehyde 3-phosphate + L-glutamine = pyridoxal 5'-phosphate + L-glutamate + phosphate + 3 H2O + H(+). It functions in the pathway cofactor biosynthesis; pyridoxal 5'-phosphate biosynthesis. Functionally, catalyzes the formation of pyridoxal 5'-phosphate from ribose 5-phosphate (RBP), glyceraldehyde 3-phosphate (G3P) and ammonia. The ammonia is provided by the PdxT subunit. Can also use ribulose 5-phosphate and dihydroxyacetone phosphate as substrates, resulting from enzyme-catalyzed isomerization of RBP and G3P, respectively. This is Pyridoxal 5'-phosphate synthase subunit PdxS from Natranaerobius thermophilus (strain ATCC BAA-1301 / DSM 18059 / JW/NM-WN-LF).